The primary structure comprises 73 residues: MHFLKKSIFLVLFLGLVSLSICEKEKREDQNEEEVDENEEASEEKRGLMSILGKVAGNVLGGLFKPKENVQKM.

Positions 1 to 22 are cleaved as a signal peptide; that stretch reads MHFLKKSIFLVLFLGLVSLSIC. Positions 23–46 are excised as a propeptide; it reads EKEKREDQNEEEVDENEEASEEKR. The disordered stretch occupies residues 25–45; it reads EKREDQNEEEVDENEEASEEK. The span at 30–42 shows a compositional bias: acidic residues; sequence QNEEEVDENEEAS.

In terms of tissue distribution, expressed by the skin glands.

The protein localises to the secreted. Its function is as follows. Antimicrobial peptide with activity against both Gram-positive and Gram-negative bacteria. The chain is Frenatin 3.1 from Nyctimystes infrafrenatus (White-lipped tree frog).